Reading from the N-terminus, the 302-residue chain is N-acetyl-D-glucosamine kinase (302 aa).

ATP-binding positions include 4–11 and 133–140; these read GFDVGGTK and GFGGGLVY. Residues His157, Cys177, Cys179, and Cys184 each contribute to the Zn(2+) site.

This sequence belongs to the ROK (NagC/XylR) family. NagK subfamily.

It carries out the reaction N-acetyl-D-glucosamine + ATP = N-acetyl-D-glucosamine 6-phosphate + ADP + H(+). It functions in the pathway cell wall biogenesis; peptidoglycan recycling. Its function is as follows. Catalyzes the phosphorylation of N-acetyl-D-glucosamine (GlcNAc) derived from cell-wall degradation, yielding GlcNAc-6-P. This chain is N-acetyl-D-glucosamine kinase, found in Vibrio cholerae serotype O1 (strain ATCC 39315 / El Tor Inaba N16961).